An 876-amino-acid chain; its full sequence is Leucine--tRNA ligase (876 aa).

A 'HIGH' region motif is present at residues 42-52; sequence PYPSGKLHMGH. The 'KMSKS' region signature appears at 634 to 638; that stretch reads KMSKS. Position 637 (K637) interacts with ATP.

It belongs to the class-I aminoacyl-tRNA synthetase family.

It is found in the cytoplasm. The catalysed reaction is tRNA(Leu) + L-leucine + ATP = L-leucyl-tRNA(Leu) + AMP + diphosphate. The sequence is that of Leucine--tRNA ligase from Neisseria gonorrhoeae (strain NCCP11945).